Reading from the N-terminus, the 258-residue chain is Imidazole glycerol phosphate synthase subunit HisF (258 aa).

Residues aspartate 11 and aspartate 130 contribute to the active site.

It belongs to the HisA/HisF family. As to quaternary structure, heterodimer of HisH and HisF.

Its subcellular location is the cytoplasm. It carries out the reaction 5-[(5-phospho-1-deoxy-D-ribulos-1-ylimino)methylamino]-1-(5-phospho-beta-D-ribosyl)imidazole-4-carboxamide + L-glutamine = D-erythro-1-(imidazol-4-yl)glycerol 3-phosphate + 5-amino-1-(5-phospho-beta-D-ribosyl)imidazole-4-carboxamide + L-glutamate + H(+). It functions in the pathway amino-acid biosynthesis; L-histidine biosynthesis; L-histidine from 5-phospho-alpha-D-ribose 1-diphosphate: step 5/9. Its function is as follows. IGPS catalyzes the conversion of PRFAR and glutamine to IGP, AICAR and glutamate. The HisF subunit catalyzes the cyclization activity that produces IGP and AICAR from PRFAR using the ammonia provided by the HisH subunit. The protein is Imidazole glycerol phosphate synthase subunit HisF of Escherichia coli O127:H6 (strain E2348/69 / EPEC).